The sequence spans 178 residues: Protein 105R (178 aa).

Positions 1 to 18 (MYFLFFFLLFLFPVGVKG) are cleaved as a signal peptide.

The sequence is that of Protein 105R from Pantherophis guttatus (Corn snake).